The primary structure comprises 153 residues: 6,7-dimethyl-8-ribityllumazine synthase (153 aa).

5-amino-6-(D-ribitylamino)uracil is bound by residues phenylalanine 23, 57–59 (AYE), and 81–83 (AVI). Residue 86–87 (AT) coordinates (2S)-2-hydroxy-3-oxobutyl phosphate. The active-site Proton donor is the histidine 89. A 5-amino-6-(D-ribitylamino)uracil-binding site is contributed by phenylalanine 113. (2S)-2-hydroxy-3-oxobutyl phosphate is bound at residue arginine 127.

Belongs to the DMRL synthase family.

The catalysed reaction is (2S)-2-hydroxy-3-oxobutyl phosphate + 5-amino-6-(D-ribitylamino)uracil = 6,7-dimethyl-8-(1-D-ribityl)lumazine + phosphate + 2 H2O + H(+). The protein operates within cofactor biosynthesis; riboflavin biosynthesis; riboflavin from 2-hydroxy-3-oxobutyl phosphate and 5-amino-6-(D-ribitylamino)uracil: step 1/2. Functionally, catalyzes the formation of 6,7-dimethyl-8-ribityllumazine by condensation of 5-amino-6-(D-ribitylamino)uracil with 3,4-dihydroxy-2-butanone 4-phosphate. This is the penultimate step in the biosynthesis of riboflavin. The chain is 6,7-dimethyl-8-ribityllumazine synthase from Leptospira borgpetersenii serovar Hardjo-bovis (strain JB197).